A 181-amino-acid polypeptide reads, in one-letter code: Inner membrane-spanning protein YciB (181 aa).

The next 5 membrane-spanning stretches (helical) occupy residues 24 to 44 (SATA…WLRH), 49 to 69 (NMLW…LILQ), 81 to 101 (LYWL…KNLI), 119 to 139 (LNIS…YVAY), and 149 to 169 (FKLF…ALLL).

The protein belongs to the YciB family.

It localises to the cell inner membrane. Functionally, plays a role in cell envelope biogenesis, maintenance of cell envelope integrity and membrane homeostasis. In Nitrosomonas eutropha (strain DSM 101675 / C91 / Nm57), this protein is Inner membrane-spanning protein YciB.